Consider the following 78-residue polypeptide: D-alanyl carrier protein (78 aa).

A Carrier domain is found at 1-78 (MEFREQVLDL…KIVEALEELK (78 aa)). S36 bears the O-(pantetheine 4'-phosphoryl)serine mark.

The protein belongs to the DltC family. 4'-phosphopantetheine is transferred from CoA to a specific serine of apo-DCP.

Its subcellular location is the cytoplasm. Its pathway is cell wall biogenesis; lipoteichoic acid biosynthesis. Carrier protein involved in the D-alanylation of lipoteichoic acid (LTA). The loading of thioester-linked D-alanine onto DltC is catalyzed by D-alanine--D-alanyl carrier protein ligase DltA. The DltC-carried D-alanyl group is further transferred to cell membrane phosphatidylglycerol (PG) by forming an ester bond, probably catalyzed by DltD. D-alanylation of LTA plays an important role in modulating the properties of the cell wall in Gram-positive bacteria, influencing the net charge of the cell wall. The protein is D-alanyl carrier protein of Staphylococcus carnosus (strain TM300).